A 100-amino-acid polypeptide reads, in one-letter code: MAKKALIARETKRQKLVQKYAAKRLEFKERIRTAESIREVVSIQREFQGLPRNSSKVRLKNRCAKTGRPKGYYRDFGLSRHVLREMAHQGLLPGVRKASW.

The protein belongs to the universal ribosomal protein uS14 family. In terms of assembly, part of the 30S ribosomal subunit.

It localises to the plastid. The protein localises to the chloroplast. In terms of biological role, binds 16S rRNA, required for the assembly of 30S particles. The chain is Small ribosomal subunit protein uS14c from Ostreococcus tauri.